A 142-amino-acid chain; its full sequence is uncharacterized protein (142 aa).

The tract at residues 1-22 is disordered; it reads MSGSVNQNTDQHSQDSSSTPNN. The next 2 membrane-spanning stretches (helical) occupy residues 63–83 and 109–129; these read LFVMYMIVQVSYYIVPFVLLV and IIDGIIGVLQFIFWFWIFVDL.

The protein resides in the membrane. This is an uncharacterized protein from Acanthamoeba polyphaga mimivirus (APMV).